The following is a 163-amino-acid chain: Nucleotide-binding protein AM1_1863 (163 aa).

It belongs to the YajQ family.

Nucleotide-binding protein. The chain is Nucleotide-binding protein AM1_1863 from Acaryochloris marina (strain MBIC 11017).